Here is a 430-residue protein sequence, read N- to C-terminus: Protein IQ-DOMAIN 3 (430 aa).

Residues 1–36 (MGKSWFSAVKKALSPEPKQKKEQKPHKSKKWFGKSK) are disordered. Positions 9–16 (VKKALSPE) match the Nuclear localization signal 1 motif. Over residues 23–35 (QKPHKSKKWFGKS) the composition is skewed to basic residues. The 29-residue stretch at 107–135 (EEIAAIKIQTAFRGYMARRALRALRGLVR) folds into the IQ domain. The stretch at 170–224 (RLRLSEDKQALTRQLQQKHNKDFDKTGENWNDSTLSREKVEANMLNKQVATMRRE) forms a coiled coil. The tract at residues 213-231 (MLNKQVATMRREKALAYAF) is calmodulin-binding. Disordered stretches follow at residues 271-368 (ENHS…SQSV) and 385-430 (SNLS…TNLA). A compositionally biased stretch (low complexity) spans 286-295 (ARSVASRAMS). Over residues 326–340 (SEDSNSIVSFQSEQP) the composition is skewed to polar residues. The short motif at 396–403 (AKKRLSFS) is the Nuclear localization signal 2 element.

It belongs to the IQD family. In terms of assembly, binds to multiple calmodulin (CaM) in the presence of Ca(2+) and CaM-like proteins.

The protein localises to the nucleus. The protein resides in the nucleolus. Its subcellular location is the cytoplasm. It localises to the cytoskeleton. In terms of biological role, may be involved in cooperative interactions with calmodulins or calmodulin-like proteins. Recruits calmodulin proteins to microtubules, thus being a potential scaffold in cellular signaling and trafficking. May associate with nucleic acids and regulate gene expression at the transcriptional or post-transcriptional level. This is Protein IQ-DOMAIN 3 from Arabidopsis thaliana (Mouse-ear cress).